We begin with the raw amino-acid sequence, 95 residues long: Small ribosomal subunit protein bS6 (95 aa).

The protein belongs to the bacterial ribosomal protein bS6 family.

Its function is as follows. Binds together with bS18 to 16S ribosomal RNA. In Clostridium novyi (strain NT), this protein is Small ribosomal subunit protein bS6.